Consider the following 174-residue polypeptide: Adenylate kinase (174 aa).

Residues 12-41 (STGDMLRAAIKAGTPLGLEAKKIIDEGGLV) are NMP. AMP is bound by residues threonine 13, arginine 18, 39–41 (GLV), 67–70 (GFPR), and glutamine 74. An LID region spans residues 104 to 141 (GRRVHLASGRTYHIAYNPPKVEGKDDVTGEDLIQRDDD). ATP is bound by residues arginine 105 and 114 to 115 (TY). AMP-binding residues include arginine 138 and arginine 149.

It belongs to the adenylate kinase family. Monomer.

Its subcellular location is the cytoplasm. The enzyme catalyses AMP + ATP = 2 ADP. Its pathway is purine metabolism; AMP biosynthesis via salvage pathway; AMP from ADP: step 1/1. In terms of biological role, catalyzes the reversible transfer of the terminal phosphate group between ATP and AMP. Plays an important role in cellular energy homeostasis and in adenine nucleotide metabolism. The protein is Adenylate kinase of Neisseria animalis.